Here is a 126-residue protein sequence, read N- to C-terminus: Large ribosomal subunit protein bL12 (126 aa).

Belongs to the bacterial ribosomal protein bL12 family. In terms of assembly, homodimer. Part of the ribosomal stalk of the 50S ribosomal subunit. Forms a multimeric L10(L12)X complex, where L10 forms an elongated spine to which 2 to 4 L12 dimers bind in a sequential fashion. Binds GTP-bound translation factors.

Forms part of the ribosomal stalk which helps the ribosome interact with GTP-bound translation factors. Is thus essential for accurate translation. This Geobacter sp. (strain M21) protein is Large ribosomal subunit protein bL12.